Reading from the N-terminus, the 201-residue chain is 3-isopropylmalate dehydratase small subunit (201 aa).

Belongs to the LeuD family. LeuD type 1 subfamily. As to quaternary structure, heterodimer of LeuC and LeuD.

The catalysed reaction is (2R,3S)-3-isopropylmalate = (2S)-2-isopropylmalate. The protein operates within amino-acid biosynthesis; L-leucine biosynthesis; L-leucine from 3-methyl-2-oxobutanoate: step 2/4. Catalyzes the isomerization between 2-isopropylmalate and 3-isopropylmalate, via the formation of 2-isopropylmaleate. The chain is 3-isopropylmalate dehydratase small subunit from Shewanella amazonensis (strain ATCC BAA-1098 / SB2B).